The following is a 232-amino-acid chain: V-type ATP synthase subunit E (232 aa).

The protein belongs to the V-ATPase E subunit family.

Functionally, produces ATP from ADP in the presence of a proton gradient across the membrane. The polypeptide is V-type ATP synthase subunit E (atpE) (Treponema pallidum (strain Nichols)).